We begin with the raw amino-acid sequence, 507 residues long: ATP synthase subunit alpha, chloroplastic (507 aa).

170-177 (GDRQTGKT) is an ATP binding site.

The protein belongs to the ATPase alpha/beta chains family. As to quaternary structure, F-type ATPases have 2 components, CF(1) - the catalytic core - and CF(0) - the membrane proton channel. CF(1) has five subunits: alpha(3), beta(3), gamma(1), delta(1), epsilon(1). CF(0) has four main subunits: a, b, b' and c.

The protein localises to the plastid. The protein resides in the chloroplast thylakoid membrane. The enzyme catalyses ATP + H2O + 4 H(+)(in) = ADP + phosphate + 5 H(+)(out). Functionally, produces ATP from ADP in the presence of a proton gradient across the membrane. The alpha chain is a regulatory subunit. The protein is ATP synthase subunit alpha, chloroplastic of Lemna minor (Common duckweed).